Here is a 2006-residue protein sequence, read N- to C-terminus: Supporter of activation of yellow protein (2006 aa).

Disordered regions lie at residues 1–208 (MNDL…RRVE), 313–347 (MPAK…SSLA), 458–564 (EEKP…AQSQ), 744–794 (DTQD…DPAR), 821–916 (DLEG…KSRR), 929–1029 (VSVG…NNNS), 1044–1082 (CSSS…SDPL), and 1099–1196 (QQLR…SAVA). The span at 10–60 (VAATSSSGSESGTAVESAAATSTAGSAGAAGRPQSNCSANSNAKSVAASST) shows a compositional bias: low complexity. Residues 67–81 (VSSTSSPAQRDQQLN) are compositionally biased toward polar residues. The segment covering 118-128 (SPPPTLPPPTT) has biased composition (pro residues). A compositionally biased stretch (low complexity) spans 129–168 (PCDDAPSTTGASASASSASGEAPSAASAAGAAGGPMAATA). The segment covering 189–199 (ANPNSNANESQ) has biased composition (polar residues). Low complexity predominate over residues 321-347 (LSSLSPASASSSSASSSSSSSSSSSLA). Residues 485 to 494 (GGESNSSSQE) are compositionally biased toward polar residues. Residues 525-534 (SLSKEHDPKI) show a composition bias toward basic and acidic residues. The segment covering 543–563 (ASNGIASGGSKASKASKSAQS) has biased composition (low complexity). The span at 744-758 (DTQDNNNENHLKRTN) shows a compositional bias: basic and acidic residues. Polar residues-rich tracts occupy residues 759–769 (SEGNESPSSRL) and 828–844 (PPTQ…NGAL). Residues 861 to 870 (PATPQPPPVA) are compositionally biased toward pro residues. Basic and acidic residues-rich tracts occupy residues 936–945 (ADMKAKEKES) and 963–972 (ESPKTRDHRP). 2 stretches are compositionally biased toward low complexity: residues 978–990 (RTTT…LQPT) and 1018–1029 (SSESESNNNNNS). Positions 1053–1080 (GAAANQQVIGGSGSSSMLPPTTILSSSD) are enriched in polar residues. The span at 1103–1112 (SSRPSSISCG) shows a compositional bias: low complexity. Positions 1147–1158 (GRGRGRRSRGGR) are enriched in basic residues. Low complexity predominate over residues 1161 to 1173 (GSSSVDRAVSVGG). Residues 1340 to 1573 (MIQEQVALYL…PPTDLMAQLL (234 aa)) form an SAY region. The tract at residues 1579-1685 (AVGSDEIKTS…AGSEDEDGNE (107 aa)) is disordered. 2 stretches are compositionally biased toward low complexity: residues 1627-1652 (TASS…SSDT) and 1660-1677 (FSST…SGAG). The PHD-type 1; degenerate zinc-finger motif lies at 1694–1751 (TCGVCLRSQHRNARDMPEAFIRCYTCRKRVHPSCVDMPPRMVGRVRNYNWQCAGCKCC). Residues 1753-1796 (KCRSSQRPGKMLYCEQCDRGYHIYCLGLRTVPDGRWSCERCCFC) form a PHD-type 2; degenerate zinc finger. The disordered stretch occupies residues 1887 to 1911 (TSAQTDDSPMPSPGLTTNGGRALSP).

The protein belongs to the SAYP family. Widely expressed. Highly expressed in ovary. Expressed in nursing cells and growing oocytes at all stages of development and accumulates in mature oocytes. Expressed in the nuclei of syncytium blastoderm of early embryos and in the nuclei of different tissues of late embryos, larvae, and adults.

It localises to the nucleus. Its subcellular location is the cytoplasm. The protein resides in the chromosome. In terms of biological role, essential transcription regulator during early development. Coactivates transcription of some euchromatin genes and repress transcription in of euchromatin genes translocated to heterochromatin. This Drosophila melanogaster (Fruit fly) protein is Supporter of activation of yellow protein (e(y)3).